The following is a 228-amino-acid chain: UPF0173 metal-dependent hydrolase ABC2731 (228 aa).

It belongs to the UPF0173 family.

The protein is UPF0173 metal-dependent hydrolase ABC2731 of Shouchella clausii (strain KSM-K16) (Alkalihalobacillus clausii).